The sequence spans 773 residues: uncharacterized protein (773 aa).

The interval 192–219 is disordered; that stretch reads EASGTNNNPKEIEMNSDTTSSVPKSGST.

Its subcellular location is the cytoplasm. This is an uncharacterized protein from Schizosaccharomyces pombe (strain 972 / ATCC 24843) (Fission yeast).